The following is a 136-amino-acid chain: Glutaredoxin-C7 (136 aa).

The Glutaredoxin domain occupies 29–135 (LLRIESLASE…PLLKDAGALW (107 aa)). An intrachain disulfide couples Cys-49 to Cys-52. A Responsive for interaction with TGA factors motif is present at residues 133–136 (ALWL).

It belongs to the glutaredoxin family. CC-type subfamily. In terms of assembly, interacts with TGA2, TGA3, TGA7 and PAN. Interacts with TGA9 and TGA10 in the nucleus. In terms of tissue distribution, highly expressed in inflorescences, roots, and siliques. Expressed at lower levels in mature flowers.

Its subcellular location is the cytoplasm. It localises to the nucleus. Its function is as follows. Has a glutathione-disulfide oxidoreductase activity in the presence of NADPH and glutathione reductase. Reduces low molecular weight disulfides and proteins. Involved in flower development as a regulator of petal primorida initiation and further petal morphogenesis. May mediate post-translational modifications of target proteins required for normal petal organ initiation and morphogenesis. ROXY1/TGA protein interactions can occur in vivo and support their biological relevance in petal development. May be involved in the regulation of the floral regulator class C gene AG (AGAMOUS). This is Glutaredoxin-C7 (GRXC7) from Arabidopsis thaliana (Mouse-ear cress).